The sequence spans 916 residues: Protein O-GlcNAcase (916 aa).

Residues Met1 to Gly46 are disordered. Positions Phe60–Met336 constitute a GH84 domain. A protein is bound by residues Gly67, Lys98, and Asp174. The Proton donor role is filled by Asp175. A protein is bound by residues Tyr219, Trp278 to Asn280, Asp285, and Asn313. Ser364 carries the phosphoserine modification. Residues Ala443–Met465 are disordered. The span at Thr452 to Asp461 shows a compositional bias: basic and acidic residues.

This sequence belongs to the glycosyl hydrolase 84 family. As to quaternary structure, monomer. Interacts with CLOCK. In terms of processing, proteolytically cleaved by caspase-3 during apoptosis. The fragments interact with each other; cleavage does not decrease enzyme activity.

It localises to the cytoplasm. Its subcellular location is the nucleus. It catalyses the reaction 3-O-(N-acetyl-beta-D-glucosaminyl)-L-seryl-[protein] + H2O = N-acetyl-D-glucosamine + L-seryl-[protein]. The enzyme catalyses 3-O-(N-acetyl-beta-D-glucosaminyl)-L-threonyl-[protein] + H2O = L-threonyl-[protein] + N-acetyl-D-glucosamine. Its function is as follows. Cleaves GlcNAc but not GalNAc from O-glycosylated proteins. Deglycosylates a large and diverse number of proteins, such as CRYAB, ELK1, GSDMD, LMNB1 and TAB1. Can use p-nitrophenyl-beta-GlcNAc and 4-methylumbelliferone-GlcNAc as substrates but not p-nitrophenyl-beta-GalNAc or p-nitrophenyl-alpha-GlcNAc (in vitro). Does not bind acetyl-CoA and does not have histone acetyltransferase activity. This chain is Protein O-GlcNAcase, found in Mus musculus (Mouse).